The primary structure comprises 257 residues: Ribonuclease PH (257 aa).

Phosphate contacts are provided by residues Arg86 and 124-126 (GTR).

The protein belongs to the RNase PH family. In terms of assembly, homohexameric ring arranged as a trimer of dimers.

The catalysed reaction is tRNA(n+1) + phosphate = tRNA(n) + a ribonucleoside 5'-diphosphate. In terms of biological role, phosphorolytic 3'-5' exoribonuclease that plays an important role in tRNA 3'-end maturation. Removes nucleotide residues following the 3'-CCA terminus of tRNAs; can also add nucleotides to the ends of RNA molecules by using nucleoside diphosphates as substrates, but this may not be physiologically important. Probably plays a role in initiation of 16S rRNA degradation (leading to ribosome degradation) during starvation. The polypeptide is Ribonuclease PH (Sulfurihydrogenibium sp. (strain YO3AOP1)).